The sequence spans 396 residues: Ornithine aminotransferase (396 aa).

The residue at position 255 (Lys-255) is an N6-(pyridoxal phosphate)lysine.

Belongs to the class-III pyridoxal-phosphate-dependent aminotransferase family. OAT subfamily. Requires pyridoxal 5'-phosphate as cofactor.

It is found in the cytoplasm. It catalyses the reaction a 2-oxocarboxylate + L-ornithine = L-glutamate 5-semialdehyde + an L-alpha-amino acid. It participates in amino-acid biosynthesis; L-proline biosynthesis; L-glutamate 5-semialdehyde from L-ornithine: step 1/1. Functionally, catalyzes the interconversion of ornithine to glutamate semialdehyde. In Staphylococcus epidermidis (strain ATCC 12228 / FDA PCI 1200), this protein is Ornithine aminotransferase.